A 156-amino-acid polypeptide reads, in one-letter code: 3-hydroxyacyl-[acyl-carrier-protein] dehydratase FabZ (156 aa).

H54 is an active-site residue.

It belongs to the thioester dehydratase family. FabZ subfamily.

The protein localises to the cytoplasm. It carries out the reaction a (3R)-hydroxyacyl-[ACP] = a (2E)-enoyl-[ACP] + H2O. In terms of biological role, involved in unsaturated fatty acids biosynthesis. Catalyzes the dehydration of short chain beta-hydroxyacyl-ACPs and long chain saturated and unsaturated beta-hydroxyacyl-ACPs. The chain is 3-hydroxyacyl-[acyl-carrier-protein] dehydratase FabZ from Koribacter versatilis (strain Ellin345).